A 507-amino-acid polypeptide reads, in one-letter code: ATP synthase subunit alpha, chloroplastic (507 aa).

Residue 170–177 (GDRQTGKT) coordinates ATP.

Belongs to the ATPase alpha/beta chains family. In terms of assembly, F-type ATPases have 2 components, CF(1) - the catalytic core - and CF(0) - the membrane proton channel. CF(1) has five subunits: alpha(3), beta(3), gamma(1), delta(1), epsilon(1). CF(0) has four main subunits: a, b, b' and c.

The protein localises to the plastid. It is found in the chloroplast thylakoid membrane. It carries out the reaction ATP + H2O + 4 H(+)(in) = ADP + phosphate + 5 H(+)(out). In terms of biological role, produces ATP from ADP in the presence of a proton gradient across the membrane. The alpha chain is a regulatory subunit. This Citrus sinensis (Sweet orange) protein is ATP synthase subunit alpha, chloroplastic.